We begin with the raw amino-acid sequence, 301 residues long: uncharacterized protein (301 aa).

The a divalent metal cation site is built by Glu-146, Glu-148, and Asp-177.

It belongs to the FAH family.

This is an uncharacterized protein from Staphylococcus haemolyticus (strain JCSC1435).